The sequence spans 429 residues: Dihydroorotase (429 aa).

Zn(2+)-binding residues include H62 and H64. Residues 64–66 (HFR) and N96 each bind substrate. Zn(2+) contacts are provided by D154, H181, and H234. N280 is a binding site for substrate. Residue D307 coordinates Zn(2+). D307 is a catalytic residue. Substrate contacts are provided by residues H311 and 325–326 (FG).

The protein belongs to the metallo-dependent hydrolases superfamily. DHOase family. Class I DHOase subfamily. The cofactor is Zn(2+).

The catalysed reaction is (S)-dihydroorotate + H2O = N-carbamoyl-L-aspartate + H(+). It functions in the pathway pyrimidine metabolism; UMP biosynthesis via de novo pathway; (S)-dihydroorotate from bicarbonate: step 3/3. In terms of biological role, catalyzes the reversible cyclization of carbamoyl aspartate to dihydroorotate. The chain is Dihydroorotase from Latilactobacillus sakei subsp. sakei (strain 23K) (Lactobacillus sakei subsp. sakei).